Here is a 186-residue protein sequence, read N- to C-terminus: Adenylate kinase isoenzyme 6 homolog (186 aa).

Residues G15, G17, K18, S19, and T20 each coordinate ATP. The segment at 48–71 (NLSNIIKDERLYKEFDDELDASIY) is NMPbind. Residues 126-136 (KRNYTKEKIKN) form an LID region. An ATP-binding site is contributed by R127.

This sequence belongs to the adenylate kinase family. AK6 subfamily. As to quaternary structure, monomer and homodimer. Interacts with small ribosomal subunit protein uS11. Not a structural component of 43S pre-ribosomes, but transiently interacts with them by binding to uS11.

Its subcellular location is the cytoplasm. It localises to the nucleus. The catalysed reaction is AMP + ATP = 2 ADP. It carries out the reaction ATP + H2O = ADP + phosphate + H(+). Functionally, broad-specificity nucleoside monophosphate (NMP) kinase that catalyzes the reversible transfer of the terminal phosphate group between nucleoside triphosphates and monophosphates. Also has ATPase activity. Involved in the late cytoplasmic maturation steps of the 40S ribosomal particles, specifically 18S rRNA maturation. While NMP activity is not required for ribosome maturation, ATPase activity is. Associates transiently with small ribosomal subunit protein uS11. ATP hydrolysis breaks the interaction with uS11. May temporarily remove uS11 from the ribosome to enable a conformational change of the ribosomal RNA that is needed for the final maturation step of the small ribosomal subunit. Its NMP activity may have a role in nuclear energy homeostasis. This is Adenylate kinase isoenzyme 6 homolog from Plasmodium falciparum (isolate 3D7).